We begin with the raw amino-acid sequence, 58 residues long: Small ribosomal subunit protein bS21 (58 aa).

The tract at residues 36–58 (EHYEKPSVKRKKKSEAARRRKYR) is disordered. Residues 43–58 (VKRKKKSEAARRRKYR) are compositionally biased toward basic residues.

Belongs to the bacterial ribosomal protein bS21 family.

This chain is Small ribosomal subunit protein bS21, found in Symbiobacterium thermophilum (strain DSM 24528 / JCM 14929 / IAM 14863 / T).